Consider the following 68-residue polypeptide: MKCHRCGSDNVRKMVDSPVGDAWEVYVCEKCCYSWRSTENPVVMEKFKLDDNKIANMGVIPPIPPLKK.

Functionally, involved in the non-oxidative decarboxylation and detoxification of phenolic derivatives under anaerobic conditions, however the precise biochemical function of ShdD in metabolism of phenolic acid is unknown. The sequence is that of Protein ShdD from Sedimentibacter hydroxybenzoicus (Clostridium hydroxybenzoicum).